The following is a 246-amino-acid chain: UL16-binding protein 2 (246 aa).

An N-terminal signal peptide occupies residues 1–25 (MAAAAATKILLCLPLLLLLSGWSRA). The tract at residues 29-117 (DPHSLCYDIT…IQLENYTPKE (89 aa)) is MHC class I alpha-1 like. Cysteine 50 and cysteine 66 are disulfide-bonded. Residues asparagine 68 and asparagine 82 are each glycosylated (N-linked (GlcNAc...) asparagine). The interval 118-210 (PLTLQARMSC…MDSTLEPSAG (93 aa)) is MHC class I alpha-2 like. An intrachain disulfide couples cysteine 127 to cysteine 190. Serine 216 serves as a coordination point for a protein. Serine 217 carries the GPI-anchor amidated serine lipid modification. Positions 218–246 (GTTQLRATATTLILCCLLIILPCFILPGI) are cleaved as a propeptide — removed in mature form.

Belongs to the MHC class I family. Interacts with KLRK1/NKG2D. Does not bind to beta2-microglobulin. In terms of assembly, (Microbial infection) In CMV-infected cells, interacts with the viral glycoprotein UL16; this interaction causes ULBP2 retention in the endoplasmic reticulum and cis-Golgi and prevents binding to and activation of KLRK1/NKG2D, providing CMV with an immune evasion mechanism. As to expression, expressed in various types of cancer cell lines and in the fetus, but not in normal tissues.

Its subcellular location is the cell membrane. It is found in the endoplasmic reticulum. The protein localises to the secreted. Its function is as follows. Binds and activates the KLRK1/NKG2D receptor, mediating natural killer cell cytotoxicity. This Homo sapiens (Human) protein is UL16-binding protein 2.